The primary structure comprises 249 residues: tRNA (guanine-N(1)-)-methyltransferase (249 aa).

Residues Gly113 and 133–138 (IGDFVL) each bind S-adenosyl-L-methionine.

It belongs to the RNA methyltransferase TrmD family. As to quaternary structure, homodimer.

It is found in the cytoplasm. It catalyses the reaction guanosine(37) in tRNA + S-adenosyl-L-methionine = N(1)-methylguanosine(37) in tRNA + S-adenosyl-L-homocysteine + H(+). Functionally, specifically methylates guanosine-37 in various tRNAs. The sequence is that of tRNA (guanine-N(1)-)-methyltransferase from Photobacterium profundum (strain SS9).